Here is a 468-residue protein sequence, read N- to C-terminus: Mitochondrial distribution and morphology protein 10 (468 aa).

Over residues 370-386 (ERDGLPGIQRDDHDMHH) the composition is skewed to basic and acidic residues. The tract at residues 370–394 (ERDGLPGIQRDDHDMHHHPQRPHAS) is disordered.

This sequence belongs to the MDM10 family. Component of the ER-mitochondria encounter structure (ERMES) or MDM complex, composed of MMM1, MDM10, MDM12 and MDM34. Associates with the mitochondrial outer membrane sorting assembly machinery SAM(core) complex.

The protein localises to the mitochondrion outer membrane. Functionally, component of the ERMES/MDM complex, which serves as a molecular tether to connect the endoplasmic reticulum and mitochondria. Components of this complex are involved in the control of mitochondrial shape and protein biogenesis and may function in phospholipid exchange. MDM10 is involved in the late assembly steps of the general translocase of the mitochondrial outer membrane (TOM complex). Functions in the TOM40-specific route of the assembly of outer membrane beta-barrel proteins, including the association of TOM40 with the receptor TOM22 and small TOM proteins. Can associate with the SAM(core) complex as well as the MDM12-MMM1 complex, both involved in late steps of the major beta-barrel assembly pathway, that is responsible for biogenesis of all outer membrane beta-barrel proteins. May act as a switch that shuttles between both complexes and channels precursor proteins into the TOM40-specific pathway. Plays a role in mitochondrial morphology and in the inheritance of mitochondria. The sequence is that of Mitochondrial distribution and morphology protein 10 from Ajellomyces dermatitidis (strain ER-3 / ATCC MYA-2586) (Blastomyces dermatitidis).